Here is a 261-residue protein sequence, read N- to C-terminus: uncharacterized protein (261 aa).

The N-terminal stretch at 1–22 (MIHSKKLTLGICLVLLIILIGG) is a signal peptide. Cys-23 is lipidated: N-palmitoyl cysteine. Residue Cys-23 is the site of S-diacylglycerol cysteine attachment.

This sequence belongs to the staphylococcal tandem lipoprotein family.

It is found in the cell membrane. This is an uncharacterized protein from Staphylococcus aureus (strain NCTC 8325 / PS 47).